The sequence spans 254 residues: Autophagy-related protein 5 (254 aa).

Lysine 102 participates in a covalent cross-link: Glycyl lysine isopeptide (Lys-Gly) (interchain with G-Cter in ATG12).

Belongs to the ATG5 family. In terms of assembly, conjugated with ATG12. The ATG5-ATG12 conjugate forms a complex with several units of ATG16. The ATG12-ATG5 conjugate also associates with ATG3. Conjugated to ATG12; which is essential for autophagy. Conjugation with ATG12 involves ATG7 as an E1-like activating enzyme and ATG10 as an E2-like conjugating enzyme.

It localises to the preautophagosomal structure membrane. Its function is as follows. Involved in cytoplasm to vacuole transport (Cvt) and autophagic vesicle formation. Autophagy is essential for maintenance of amino acid levels and protein synthesis under nitrogen starvation. Required for selective autophagic degradation of the nucleus (nucleophagy). Also required for mitophagy, which eliminates defective or superfluous mitochondria in order to fulfill cellular energy requirements and prevent excess ROS production. Conjugation with ATG12, through a ubiquitin-like conjugating system involving ATG7 as an E1-like activating enzyme and ATG10 as an E2-like conjugating enzyme, is essential for its function. The ATG12-ATG5 conjugate acts as an E3-like enzyme which is required for lipidation of ATG8 and ATG8 association to the vesicle membranes. ATG12-ATG5 rearranges the ATG3 catalytic center and enhances its E2 activity. Autophagy is required for proper vegetative growth, asexual/sexual reproduction, and full virulence. Autophagy is particularly involved in the biosynthesis of deoxynivalenol (DON), an important virulence determinant. The chain is Autophagy-related protein 5 from Gibberella zeae (strain ATCC MYA-4620 / CBS 123657 / FGSC 9075 / NRRL 31084 / PH-1) (Wheat head blight fungus).